Consider the following 308-residue polypeptide: Porphobilinogen deaminase (308 aa).

The residue at position 240 (C240) is an S-(dipyrrolylmethanemethyl)cysteine.

Belongs to the HMBS family. In terms of assembly, monomer. It depends on dipyrromethane as a cofactor.

The catalysed reaction is 4 porphobilinogen + H2O = hydroxymethylbilane + 4 NH4(+). It participates in porphyrin-containing compound metabolism; protoporphyrin-IX biosynthesis; coproporphyrinogen-III from 5-aminolevulinate: step 2/4. In terms of biological role, tetrapolymerization of the monopyrrole PBG into the hydroxymethylbilane pre-uroporphyrinogen in several discrete steps. This chain is Porphobilinogen deaminase, found in Maridesulfovibrio salexigens (strain ATCC 14822 / DSM 2638 / NCIMB 8403 / VKM B-1763) (Desulfovibrio salexigens).